Here is a 142-residue protein sequence, read N- to C-terminus: Hemoglobin subunit alpha (142 aa).

The region spanning 2–142 is the Globin domain; that stretch reads VLSAADKSNV…VGTVLTSKYR (141 aa). Phosphoserine is present on S4. 2 positions are modified to N6-succinyllysine: K8 and K12. At K17 the chain carries N6-acetyllysine; alternate. K17 carries the N6-succinyllysine; alternate modification. Y25 carries the phosphotyrosine modification. A Phosphoserine modification is found at S36. K41 is modified (N6-succinyllysine). S50 bears the Phosphoserine mark. H59 contacts O2. Residue H88 participates in heme b binding. S103 carries the post-translational modification Phosphoserine. A Phosphothreonine modification is found at T109. A phosphoserine mark is found at S125 and S132. Residues T135 and T138 each carry the phosphothreonine modification. S139 is subject to Phosphoserine.

Belongs to the globin family. As to quaternary structure, heterotetramer of two alpha chains and two beta chains. In terms of tissue distribution, red blood cells.

Functionally, involved in oxygen transport from the lung to the various peripheral tissues. In terms of biological role, hemopressin acts as an antagonist peptide of the cannabinoid receptor CNR1. Hemopressin-binding efficiently blocks cannabinoid receptor CNR1 and subsequent signaling. In Pantholops hodgsonii (Chiru), this protein is Hemoglobin subunit alpha (HBA).